We begin with the raw amino-acid sequence, 183 residues long: Probable chemoreceptor glutamine deamidase CheD (183 aa).

It belongs to the CheD family.

The catalysed reaction is L-glutaminyl-[protein] + H2O = L-glutamyl-[protein] + NH4(+). Its function is as follows. Probably deamidates glutamine residues to glutamate on methyl-accepting chemotaxis receptors (MCPs), playing an important role in chemotaxis. In Rhizobium meliloti (strain 1021) (Ensifer meliloti), this protein is Probable chemoreceptor glutamine deamidase CheD.